We begin with the raw amino-acid sequence, 175 residues long: NADH-ubiquinone oxidoreductase chain 6 (175 aa).

Transmembrane regions (helical) follow at residues 1 to 21, 25 to 45, 47 to 67, 88 to 108, and 149 to 169; these read MMTYIVFILSTVFVVSFVSFS, SPIYGGFGLIVAGGTGCGIVL, FGGSFLGLMVFLIYLGGMLVV, AVLAMFITGVLAELLTACYIL, and YGTWLVVVTGWSLLIGVLVIM.

This sequence belongs to the complex I subunit 6 family. Core subunit of respiratory chain NADH dehydrogenase (Complex I) which is composed of 45 different subunits.

It localises to the mitochondrion inner membrane. The catalysed reaction is a ubiquinone + NADH + 5 H(+)(in) = a ubiquinol + NAD(+) + 4 H(+)(out). Core subunit of the mitochondrial membrane respiratory chain NADH dehydrogenase (Complex I) which catalyzes electron transfer from NADH through the respiratory chain, using ubiquinone as an electron acceptor. Essential for the catalytic activity and assembly of complex I. This is NADH-ubiquinone oxidoreductase chain 6 (MT-ND6) from Felis catus (Cat).